Reading from the N-terminus, the 937-residue chain is Protocadherin alpha-7 (937 aa).

A signal peptide spans 1–29 (MVCPNGYDPGGRHLLLFIIILAAWEAGRG). Cadherin domains follow at residues 30–133 (QLHY…PPVF), 134–242 (PATQ…APVF), 243–350 (DRTL…APQL), 351–455 (TLTS…APAF), 456–565 (AQPE…APAL), and 581–678 (VPRS…APKA). The Extracellular segment spans residues 30-697 (QLHYSVPEEA…GPETELVDVN (668 aa)). The cysteines at positions 96 and 102 are disulfide-linked. Residues N254 and N265 are each glycosylated (N-linked (GlcNAc...) asparagine). The N-linked (GlcNAc...) asparagine glycan is linked to N548. A helical membrane pass occupies residues 698–718 (VYLIIAICAVSSLLVLTLLLY). The Cytoplasmic segment spans residues 719-937 (TALRCSAPSS…GNSTTDNSDQ (219 aa)). 2 disordered regions span residues 755-795 (RQRV…DWRY) and 814-937 (ILRA…NSDQ). 5 PXXP repeats span residues 774–777 (PSLP), 786–789 (PRQP), 819–822 (PGGP), 860–863 (PGNP), and 878–881 (PGSP). A 5 X 4 AA repeats of P-X-X-P region spans residues 774-881 (PSLPQGPSST…PDKFIIPGSP (108 aa)). A compositionally biased stretch (polar residues) spans 775–787 (SLPQGPSSTDNPR). The span at 896-910 (DKSDFITFGKKEETK) shows a compositional bias: basic and acidic residues.

In terms of assembly, forms homodimers in trans (molecules expressed by two different cells). Forms promiscuous heterodimers in cis (at the plasma membrane of the same cell) with other protocadherins.

The protein localises to the cell membrane. Calcium-dependent cell-adhesion protein involved in cells self-recognition and non-self discrimination. Thereby, it is involved in the establishment and maintenance of specific neuronal connections in the brain. This is Protocadherin alpha-7 from Homo sapiens (Human).